Here is a 249-residue protein sequence, read N- to C-terminus: Acetylglutamate kinase (249 aa).

Substrate contacts are provided by residues glycine 36–glycine 37, arginine 58, and asparagine 147.

It belongs to the acetylglutamate kinase family. ArgB subfamily.

Its subcellular location is the cytoplasm. The catalysed reaction is N-acetyl-L-glutamate + ATP = N-acetyl-L-glutamyl 5-phosphate + ADP. It participates in amino-acid biosynthesis; L-arginine biosynthesis; N(2)-acetyl-L-ornithine from L-glutamate: step 2/4. Its function is as follows. Catalyzes the ATP-dependent phosphorylation of N-acetyl-L-glutamate. This is Acetylglutamate kinase from Thermus thermophilus (strain ATCC 27634 / DSM 579 / HB8).